A 376-amino-acid polypeptide reads, in one-letter code: Putative glutamate--cysteine ligase 2-1 (376 aa).

The protein belongs to the glutamate--cysteine ligase type 2 family. YbdK subfamily.

It carries out the reaction L-cysteine + L-glutamate + ATP = gamma-L-glutamyl-L-cysteine + ADP + phosphate + H(+). ATP-dependent carboxylate-amine ligase which exhibits weak glutamate--cysteine ligase activity. The polypeptide is Putative glutamate--cysteine ligase 2-1 (Mycobacterium sp. (strain KMS)).